The chain runs to 480 residues: Probable cobyric acid synthase (480 aa).

The region spanning 246–431 is the GATase cobBQ-type domain; the sequence is PVRIAVIRLP…MHGLFLNPSA (186 aa). Cys325 acts as the Nucleophile in catalysis. Residue His423 is part of the active site.

This sequence belongs to the CobB/CobQ family. CobQ subfamily.

It functions in the pathway cofactor biosynthesis; adenosylcobalamin biosynthesis. Functionally, catalyzes amidations at positions B, D, E, and G on adenosylcobyrinic A,C-diamide. NH(2) groups are provided by glutamine, and one molecule of ATP is hydrogenolyzed for each amidation. The chain is Probable cobyric acid synthase from Methanoregula boonei (strain DSM 21154 / JCM 14090 / 6A8).